Reading from the N-terminus, the 159-residue chain is Aphid transmission protein (159 aa).

The protein belongs to the caulimoviridae ORF II family.

This protein is involved in virus transmission. In Cauliflower mosaic virus (strain PV147) (CaMV), this protein is Aphid transmission protein.